Here is a 483-residue protein sequence, read N- to C-terminus: Glutamate--tRNA ligase (483 aa).

A 'HIGH' region motif is present at residues 9–19; sequence PSPTGNLHIGT. The 'KMSKS' region signature appears at 250–254; that stretch reads KLSKR. Lys-253 contributes to the ATP binding site.

It belongs to the class-I aminoacyl-tRNA synthetase family. Glutamate--tRNA ligase type 1 subfamily. In terms of assembly, monomer.

The protein resides in the cytoplasm. It carries out the reaction tRNA(Glu) + L-glutamate + ATP = L-glutamyl-tRNA(Glu) + AMP + diphosphate. Catalyzes the attachment of glutamate to tRNA(Glu) in a two-step reaction: glutamate is first activated by ATP to form Glu-AMP and then transferred to the acceptor end of tRNA(Glu). This is Glutamate--tRNA ligase from Synechocystis sp. (strain ATCC 27184 / PCC 6803 / Kazusa).